The sequence spans 83 residues: Large ribosomal subunit protein uL24 (83 aa).

The protein belongs to the universal ribosomal protein uL24 family. As to quaternary structure, part of the 50S ribosomal subunit.

One of two assembly initiator proteins, it binds directly to the 5'-end of the 23S rRNA, where it nucleates assembly of the 50S subunit. In terms of biological role, one of the proteins that surrounds the polypeptide exit tunnel on the outside of the subunit. In Symbiobacterium thermophilum (strain DSM 24528 / JCM 14929 / IAM 14863 / T), this protein is Large ribosomal subunit protein uL24.